Here is a 203-residue protein sequence, read N- to C-terminus: uncharacterized protein (203 aa).

This is an uncharacterized protein from Magallana gigas (Pacific oyster).